Reading from the N-terminus, the 208-residue chain is Large ribosomal subunit protein uL3 (208 aa).

Residue glutamine 149 is modified to N5-methylglutamine.

It belongs to the universal ribosomal protein uL3 family. In terms of assembly, part of the 50S ribosomal subunit. Forms a cluster with proteins L14 and L19. Post-translationally, methylated by PrmB.

Its function is as follows. One of the primary rRNA binding proteins, it binds directly near the 3'-end of the 23S rRNA, where it nucleates assembly of the 50S subunit. In Actinobacillus pleuropneumoniae serotype 5b (strain L20), this protein is Large ribosomal subunit protein uL3.